Here is a 1549-residue protein sequence, read N- to C-terminus: Trichohyalin (1549 aa).

An S-100-like region spans residues 1 to 91 (MSPLLRSIFN…AAACYYALGQ (91 aa)). EF-hand domains lie at 23–48 (CDGT…LRKP) and 49–84 (HDPE…VAAA). Positions 27, 32, 62, 64, 66, and 73 each coordinate Ca(2+). Disordered stretches follow at residues 97 to 125 (EKEA…PQDR), 157 to 180 (LQRR…GREL), 262 to 359 (LRRK…KQEQ), and 404 to 448 (QREK…RQER). 3 stretches are compositionally biased toward basic and acidic residues: residues 171-180 (LQQRPKGREL), 262-278 (LRRK…RQEQ), and 317-335 (HRQE…ERQQ). Residues 336–348 (EQQISEEVQSLQE) show a composition bias toward low complexity. Over residues 349–359 (DQGRQRLKQEQ) the composition is skewed to basic and acidic residues. 14 repeat units span residues 413-448 (ERQY…RQER), 449-476 (EKQY…RQER), 477-504 (EKQY…RQER), 505-532 (ERQY…RQER), 533-560 (ERQY…RQER), 561-588 (EKQY…RQER), 589-616 (EKQY…RQER), 617-644 (ERQY…RQER), 645-678 (ERQY…RQER), 679-706 (ERQY…RQER), 707-742 (ERQY…RQVR), 743-771 (ERKY…DREK), 772-796 (RQYL…RQER), and 797-832 (ERQY…RQEL). Residues 413–832 (ERQYREVELQ…ECEKRRRQEL (420 aa)) are 14 X 28 AA approximate tandem repeats. Disordered stretches follow at residues 782–803 (REEE…YREE), 839–942 (EELQ…RKFR), and 980–1000 (QLRQ…ERDR). 3 stretches are compositionally biased toward basic and acidic residues: residues 850–884 (FRDD…DSWV), 895–918 (PLQD…KRDS), and 925–942 (LLER…RKFR). 23 consecutive repeat copies span residues 938–961 (DRKF…YLEE), 962–985 (DRKF…RQER), 986–1021 (DRKF…RQER), 1022–1044 (DRKF…RQER), 1045–1067 (DRKF…RQER), 1068–1090 (DRKF…LRQE), 1091–1121 (RNRK…RQKR), 1122–1144 (DRKF…RQER), 1145–1167 (DRKF…RQER), 1168–1197 (DRKF…RQER), 1198–1227 (DRKF…RQER), 1228–1250 (DRKF…RQER), 1251–1273 (DRKF…RQER), 1274–1296 (DRKF…RQER), 1297–1319 (DRKF…RQER), 1320–1342 (DRKF…RQER), 1343–1368 (DRKF…ELEG), 1369–1391 (VFSQ…QRQR), 1392–1416 (DRKF…VQEQ), 1417–1439 (DRKF…RRRQ), 1440–1461 (QLDQ…RRQE), 1462–1484 (QELR…EEEQ), and 1485–1507 (LRRQ…SRRQ). Positions 938–1507 (DRKFREEEQL…ERDVQQSRRQ (570 aa)) are 23 X 23 AA approximate tandem repeats. Residues 1489 to 1523 (QQEEQKRRQERDVQQSRRQVWEEDKGRRQVLEAGK) are compositionally biased toward basic and acidic residues. The tract at residues 1489 to 1549 (QQEEQKRRQE…IQEQRSQYRP (61 aa)) is disordered.

Belongs to the S100-fused protein family. Homodimer. Substrate of transglutaminase. Some 200 arginines are probably converted to citrullines by peptidylarginine deimidase. Found in the hard keratinizing tissues such as the inner root sheath (IRS) of hair follicles and medulla, and in the epithelia of the tongue, hoof and rumen.

Functionally, intermediate filament-associated protein that associates in regular arrays with keratin intermediate filaments (KIF) of the inner root sheath cells of the hair follicle and the granular layer of the epidermis. It later becomes cross-linked to KIF by isodipeptide bonds. It may serve as scaffold protein, together with involucrin, in the organization of the cell envelope or even anchor the cell envelope to the KIF network. It may be involved in its own calcium-dependent postsynthetic processing during terminal differentiation. This is Trichohyalin (TCHH) from Ovis aries (Sheep).